A 47-amino-acid chain; its full sequence is Packaging protein P22 (47 aa).

Residues threonine 22–isoleucine 42 form a helical membrane-spanning segment.

As to quaternary structure, heterodimer of P20 and P22; further multimerizes as hexamers of heterodimers. Part of the dodecameric portal complex that is composed of the packaging efficiency factor P6, the DNA packaging ATPase P9, and the internal heterododecamer P20/P22 which spans the virion inner membrane.

Its subcellular location is the virion membrane. Its function is as follows. Together with P22, forms the internal part of the portal complex embeded in the virion internal membrane and which plays critical roles in genome packaging and genome ejection. Both proteins multimerize as a single ring-shaped heterdodecamer arranged around a central channel and interact with the P6/P9 external part of the portal. This Enterobacteria phage PRD1 (Bacteriophage PRD1) protein is Packaging protein P22 (XXII).